The chain runs to 31 residues: Electron transfer flavoprotein-ubiquinone oxidoreductase (31 aa).

An FAD-binding site is contributed by 11–25; sequence VVIVGAGGAGLSAAI.

In terms of assembly, monomer. It depends on [4Fe-4S] cluster as a cofactor. The cofactor is FAD.

It catalyses the reaction a ubiquinone + reduced [electron-transfer flavoprotein] = a ubiquinol + oxidized [electron-transfer flavoprotein] + H(+). Accepts electrons from ETF and reduces ubiquinone. The protein is Electron transfer flavoprotein-ubiquinone oxidoreductase of Paracoccus denitrificans.